Here is a 609-residue protein sequence, read N- to C-terminus: UvrABC system protein C (609 aa).

Positions 16-94 constitute a GIY-YIG domain; sequence SSPGVYRMYD…IKQYMPRYNV (79 aa). A UVR domain is found at 203–238; the sequence is LQVMTELVSKMEASALALEYEQAASYRDQIAALRRV.

It belongs to the UvrC family. In terms of assembly, interacts with UvrB in an incision complex.

The protein resides in the cytoplasm. The UvrABC repair system catalyzes the recognition and processing of DNA lesions. UvrC both incises the 5' and 3' sides of the lesion. The N-terminal half is responsible for the 3' incision and the C-terminal half is responsible for the 5' incision. The chain is UvrABC system protein C from Shewanella sediminis (strain HAW-EB3).